The sequence spans 572 residues: 2-succinyl-5-enolpyruvyl-6-hydroxy-3-cyclohexene-1-carboxylate synthase (572 aa).

The protein belongs to the TPP enzyme family. MenD subfamily. As to quaternary structure, homodimer. Mg(2+) is required as a cofactor. Requires Mn(2+) as cofactor. Thiamine diphosphate serves as cofactor.

The catalysed reaction is isochorismate + 2-oxoglutarate + H(+) = 5-enolpyruvoyl-6-hydroxy-2-succinyl-cyclohex-3-ene-1-carboxylate + CO2. It functions in the pathway quinol/quinone metabolism; 1,4-dihydroxy-2-naphthoate biosynthesis; 1,4-dihydroxy-2-naphthoate from chorismate: step 2/7. It participates in quinol/quinone metabolism; menaquinone biosynthesis. Functionally, catalyzes the thiamine diphosphate-dependent decarboxylation of 2-oxoglutarate and the subsequent addition of the resulting succinic semialdehyde-thiamine pyrophosphate anion to isochorismate to yield 2-succinyl-5-enolpyruvyl-6-hydroxy-3-cyclohexene-1-carboxylate (SEPHCHC). This chain is 2-succinyl-5-enolpyruvyl-6-hydroxy-3-cyclohexene-1-carboxylate synthase, found in Vibrio campbellii (strain ATCC BAA-1116).